Reading from the N-terminus, the 370-residue chain is Prolactin-releasing peptide receptor (370 aa).

The Extracellular segment spans residues 1–62 (MASSTTRGPR…LQLVHQLKGL (62 aa)). Asparagine 27 and asparagine 36 each carry an N-linked (GlcNAc...) asparagine glycan. The chain crosses the membrane as a helical span at residues 63-83 (IVLLYSVVVVVGLVGNCLLVL). The Cytoplasmic segment spans residues 84-101 (VIARVRRLHNVTNFLIGN). Residues 102–122 (LALSDVLMCTACVPLTLAYAF) form a helical membrane-spanning segment. At 123-126 (EPRG) the chain is on the extracellular side. A helical membrane pass occupies residues 127-147 (WVFGGGLCHLVFFLQPVTVYV). An intrachain disulfide couples cysteine 134 to cysteine 211. Residues 148–175 (SVFTLTTIAVDRYVVLVHPLRRRISLRL) lie on the Cytoplasmic side of the membrane. Residues 176–196 (SAYAVLAIWALSAVLALPAAV) traverse the membrane as a helical segment. The Extracellular segment spans residues 197-225 (HTYHVELKPHDVRLCEEFWGSQERQRQLY). Residues 226–246 (AWGLLLVTYLLPLLVILLSYV) form a helical membrane-spanning segment. Residues 247 to 276 (RVSVKLRNRVVPGCVTQSQADWDRARRRRT) lie on the Cytoplasmic side of the membrane. Residues 277-297 (FCLLVVIVVVFAVCWLPLHVF) traverse the membrane as a helical segment. Residues 298 to 317 (NLLRDLDPHAIDPYAFGLVQ) lie on the Extracellular side of the membrane. A helical transmembrane segment spans residues 318–338 (LLCHWLAMSSACYNPFIYAWL). Residues 339 to 369 (HDSFREELRKLLVAWPRKIAPHGQNMTVSVV) are Cytoplasmic-facing. The required for interaction with GRIP1, GRIP2 and PICK1 stretch occupies residues 365–370 (TVSVVI).

The protein belongs to the G-protein coupled receptor 1 family. Interacts through its C-terminal region with the PDZ domain-containing proteins GRIP1, GRIP2 and PICK1. Interacts with PDZ domains 4 and 5 of GRIP1 and with the PDZ domain of PICK1. As to expression, only detected in the pituitary gland and in all cell types of pituitary adenomas.

Its subcellular location is the cell membrane. In terms of biological role, receptor for prolactin-releasing peptide (PrRP). Implicated in lactation, regulation of food intake and pain-signal processing. The polypeptide is Prolactin-releasing peptide receptor (PRLHR) (Homo sapiens (Human)).